Reading from the N-terminus, the 272-residue chain is ATP synthase subunit a (272 aa).

The next 6 membrane-spanning stretches (helical) occupy residues 41-61, 110-130, 143-165, 188-208, 222-242, and 243-263; these read VLNI…LSIF, FVWV…FPFI, VPSA…ILFY, VFFI…PISL, IFIL…NVPW, and AIFH…LTIV.

It belongs to the ATPase A chain family. As to quaternary structure, F-type ATPases have 2 components, CF(1) - the catalytic core - and CF(0) - the membrane proton channel. CF(1) has five subunits: alpha(3), beta(3), gamma(1), delta(1), epsilon(1). CF(0) has three main subunits: a(1), b(2) and c(9-12). The alpha and beta chains form an alternating ring which encloses part of the gamma chain. CF(1) is attached to CF(0) by a central stalk formed by the gamma and epsilon chains, while a peripheral stalk is formed by the delta and b chains.

Its subcellular location is the cell membrane. In terms of biological role, key component of the proton channel; it plays a direct role in the translocation of protons across the membrane. The sequence is that of ATP synthase subunit a from Buchnera aphidicola subsp. Schizaphis graminum (strain Sg).